Here is a 376-residue protein sequence, read N- to C-terminus: Probable allantoicase (376 aa).

Belongs to the allantoicase family.

The catalysed reaction is allantoate + H2O = (S)-ureidoglycolate + urea. Its pathway is nitrogen metabolism; (S)-allantoin degradation; (S)-ureidoglycolate from allantoate (aminidohydrolase route): step 1/1. This is Probable allantoicase from Streptomyces coelicolor (strain ATCC BAA-471 / A3(2) / M145).